We begin with the raw amino-acid sequence, 418 residues long: Histidine--tRNA ligase (418 aa).

This sequence belongs to the class-II aminoacyl-tRNA synthetase family. Homodimer.

It localises to the cytoplasm. The catalysed reaction is tRNA(His) + L-histidine + ATP = L-histidyl-tRNA(His) + AMP + diphosphate + H(+). The polypeptide is Histidine--tRNA ligase (Dehalococcoides mccartyi (strain ATCC BAA-2100 / JCM 16839 / KCTC 5957 / BAV1)).